We begin with the raw amino-acid sequence, 146 residues long: Large ribosomal subunit protein eL28 (146 aa).

The disordered stretch occupies residues 123-146 (VRAARKERSSKITFQRKAVRPKRH).

The protein belongs to the eukaryotic ribosomal protein eL28 family.

The polypeptide is Large ribosomal subunit protein eL28 (Trypanosoma cruzi).